Consider the following 497-residue polypeptide: Indoleacetaldoxime dehydratase (497 aa).

A helical transmembrane segment spans residues 2 to 20 (EMILSISLCLTTLITLLLL). Cys-439 provides a ligand contact to heme.

Belongs to the cytochrome P450 family.

The protein resides in the membrane. The catalysed reaction is (E)-(indol-3-yl)acetaldehyde oxime = (indol-3-yl)acetonitrile + H2O. Its function is as follows. Involved in the biosynthesis of the indole-derived phytoalexin camalexin. Catalyzes the conversion of indole-3-acetaldoxime to indole-3-acetonitrile. Required for resistance to A.brassicicola and B.cinerea. The chain is Indoleacetaldoxime dehydratase (CYP71A13) from Arabidopsis thaliana (Mouse-ear cress).